A 343-amino-acid chain; its full sequence is Protein RecA (343 aa).

This sequence belongs to the RecA family.

The protein resides in the cytoplasm. Functionally, can catalyze the hydrolysis of ATP in the presence of single-stranded DNA, the ATP-dependent uptake of single-stranded DNA by duplex DNA, and the ATP-dependent hybridization of homologous single-stranded DNAs. It interacts with LexA causing its activation and leading to its autocatalytic cleavage. This is Protein RecA from Coxiella burnetii (strain RSA 493 / Nine Mile phase I).